We begin with the raw amino-acid sequence, 344 residues long: Interferon gamma receptor 1-like (344 aa).

The first 22 residues, 1-22 (MSKHAVVQFGVVYALLFPGVFG), serve as a signal peptide directing secretion. The Extracellular portion of the chain corresponds to 23-229 (FVPSPTNVSV…QPTPETDKTG (207 aa)). In terms of domain architecture, Fibronectin type-III spans 24 to 102 (VPSPTNVSVV…TAHDGQEKSE (79 aa)). Residues Asn-29, Asn-44, Asn-132, and Asn-189 are each glycosylated (N-linked (GlcNAc...) asparagine). Residues 230–250 (IIAALIGGATVVLFIIMGFVW) traverse the membrane as a helical segment. The Cytoplasmic portion of the chain corresponds to 251 to 344 (LLWRKWSNIP…SSDYDRPKFL (94 aa)). Residues 300 to 344 (TEEDQSVSARDDTGADPPVVSEEGMAGEDSQGLGCSSDYDRPKFL) are disordered.

It belongs to the type II cytokine receptor family. In terms of tissue distribution, highly expressed in brain. Also detected in spleen, heart, intestine, gill and kidney. In immune cell populations, detected at low levels in monocytes, peripheral blood leukocytes, splenocytes, neutrophils and mature macrophages.

It localises to the cell membrane. Functionally, receptor which shows binding specificity for the cytokine ifng1 (interferon gamma 1). The sequence is that of Interferon gamma receptor 1-like from Carassius auratus (Goldfish).